Here is a 156-residue protein sequence, read N- to C-terminus: MSNQTVSELKVLTAKSATNYGFDVTDFKMFTHLNPLSIQVNIRHKNPDKKVTIDDCSILSQYIDEAIQGSSILDQPFNLEISSEGIGDFLTEEKDFQTFKGFPVEVSYQDLKKIEQQINGLLLKRTDNELHINQKGKTQRIPVEDVIQVRLATPSG.

This sequence belongs to the RimP family.

The protein localises to the cytoplasm. Its function is as follows. Required for maturation of 30S ribosomal subunits. The sequence is that of Ribosome maturation factor RimP from Prochlorococcus marinus (strain NATL2A).